Consider the following 256-residue polypeptide: DNA repair protein RecO (256 aa).

This sequence belongs to the RecO family.

Involved in DNA repair and RecF pathway recombination. This chain is DNA repair protein RecO, found in Rhizobium etli (strain ATCC 51251 / DSM 11541 / JCM 21823 / NBRC 15573 / CFN 42).